A 314-amino-acid polypeptide reads, in one-letter code: Ribonuclease Z (314 aa).

Zn(2+)-binding residues include histidine 61, histidine 63, aspartate 65, histidine 66, histidine 137, aspartate 207, and histidine 263. Catalysis depends on aspartate 65, which acts as the Proton acceptor.

Belongs to the RNase Z family. As to quaternary structure, homodimer. The cofactor is Zn(2+).

The enzyme catalyses Endonucleolytic cleavage of RNA, removing extra 3' nucleotides from tRNA precursor, generating 3' termini of tRNAs. A 3'-hydroxy group is left at the tRNA terminus and a 5'-phosphoryl group is left at the trailer molecule.. Functionally, zinc phosphodiesterase, which displays some tRNA 3'-processing endonuclease activity. Probably involved in tRNA maturation, by removing a 3'-trailer from precursor tRNA. The chain is Ribonuclease Z from Thermococcus gammatolerans (strain DSM 15229 / JCM 11827 / EJ3).